The chain runs to 152 residues: Diamine acetyltransferase (152 aa).

Residues 5 to 152 (FEVRKATIDD…SFLDLTPKSD (148 aa)) enclose the N-acetyltransferase domain. Tyr127 acts as the Proton donor in catalysis.

The protein belongs to the acetyltransferase family. In terms of assembly, homotetramer.

The protein localises to the cytoplasm. It carries out the reaction an alkane-alpha,omega-diamine + acetyl-CoA = an N-acetylalkane-alpha,omega-diamine + CoA + H(+). It functions in the pathway amine and polyamine degradation; putrescine degradation; N-acetylputrescine from putrescine: step 1/1. Functionally, enzyme which catalyzes the acetylation of polyamines. Displays higher substrate specificity for spermine than for spermidine. May function to acetylate host-derived polyamines, thus alleviating the necessity for de novo synthesis of these molecules. The protein is Diamine acetyltransferase of Cryptosporidium parvum (strain Iowa II).